The sequence spans 98 residues: Aspartyl/glutamyl-tRNA(Asn/Gln) amidotransferase subunit C (98 aa).

The disordered stretch occupies residues 75 to 98 (EQALSGAPDSDDNRFKVPAILDEA).

This sequence belongs to the GatC family. As to quaternary structure, heterotrimer of A, B and C subunits.

It carries out the reaction L-glutamyl-tRNA(Gln) + L-glutamine + ATP + H2O = L-glutaminyl-tRNA(Gln) + L-glutamate + ADP + phosphate + H(+). It catalyses the reaction L-aspartyl-tRNA(Asn) + L-glutamine + ATP + H2O = L-asparaginyl-tRNA(Asn) + L-glutamate + ADP + phosphate + 2 H(+). Its function is as follows. Allows the formation of correctly charged Asn-tRNA(Asn) or Gln-tRNA(Gln) through the transamidation of misacylated Asp-tRNA(Asn) or Glu-tRNA(Gln) in organisms which lack either or both of asparaginyl-tRNA or glutaminyl-tRNA synthetases. The reaction takes place in the presence of glutamine and ATP through an activated phospho-Asp-tRNA(Asn) or phospho-Glu-tRNA(Gln). The chain is Aspartyl/glutamyl-tRNA(Asn/Gln) amidotransferase subunit C from Pseudarthrobacter chlorophenolicus (strain ATCC 700700 / DSM 12829 / CIP 107037 / JCM 12360 / KCTC 9906 / NCIMB 13794 / A6) (Arthrobacter chlorophenolicus).